A 1474-amino-acid chain; its full sequence is Alpha-2-macroglobulin-P (1474 aa).

Residues 1–32 form the signal peptide; it reads MGKRWLPSLALLPLPPPLLLLLLLLLPTNASA. The cysteines at positions 55 and 93 are disulfide-linked. N-linked (GlcNAc...) asparagine glycans are attached at residues Asn62, Asn77, and Asn253. Disulfide bonds link Cys257-Cys305 and Cys275-Cys293. The N-linked (GlcNAc...) asparagine glycan is linked to Asn402. Cystine bridges form between Cys476-Cys569, Cys601-Cys771, and Cys650-Cys697. The tract at residues 623 to 752 is bait region; sequence LVYDLLPVKD…LVIVDSTGVA (130 aa). N-linked (GlcNAc...) asparagine glycosylation is found at Asn654 and Asn774. Disulfide bonds link Cys821/Cys849, Cys847/Cys883, Cys921/Cys1321, Cys1079/Cys1127, and Cys1352/Cys1467. N-linked (GlcNAc...) asparagine glycosylation occurs at Asn869. Positions 972–975 form a cross-link, isoglutamyl cysteine thioester (Cys-Gln); sequence CGEQ. Asn991 is a glycosylation site (N-linked (GlcNAc...) asparagine). Asn1366 carries an N-linked (GlcNAc...) asparagine glycan.

Belongs to the protease inhibitor I39 (alpha-2-macroglobulin) family. As to quaternary structure, homotetramer; disulfide-linked. In terms of tissue distribution, expressed in uterus, mesometrial lymphoid aggregate and mammary tissue during pregnancy. Expressed in ovary, testis and kidney. Low level expression in heart. Not expressed in liver.

The protein localises to the secreted. In terms of biological role, is able to inhibit all four classes of proteinases by a unique 'trapping' mechanism. This protein has a peptide stretch, called the 'bait region' which contains specific cleavage sites for different proteinases. When a proteinase cleaves the bait region, a conformational change is induced in the protein which traps the proteinase. The entrapped enzyme remains active against low molecular weight substrates (activity against high molecular weight substrates is greatly reduced). Following cleavage in the bait region a thioester bond is hydrolyzed and mediates the covalent binding of the protein to the proteinase. This is Alpha-2-macroglobulin-P from Mus musculus (Mouse).